The primary structure comprises 202 residues: LexA repressor (202 aa).

A DNA-binding region (H-T-H motif) is located at residues 28-48 (RAEIAQRLGFRSPNAAEEHLK). Catalysis depends on for autocatalytic cleavage activity residues Ser119 and Lys156.

It belongs to the peptidase S24 family. Homodimer.

It catalyses the reaction Hydrolysis of Ala-|-Gly bond in repressor LexA.. In terms of biological role, represses a number of genes involved in the response to DNA damage (SOS response), including recA and lexA. Binds to the 16 bp palindromic sequence 5'-CTGTATATATATACAG-3'. In the presence of single-stranded DNA, RecA interacts with LexA causing an autocatalytic cleavage which disrupts the DNA-binding part of LexA, leading to derepression of the SOS regulon and eventually DNA repair. This chain is LexA repressor, found in Citrobacter koseri (strain ATCC BAA-895 / CDC 4225-83 / SGSC4696).